The following is a 737-amino-acid chain: Elongation factor 2 (737 aa).

Residues 18 to 262 form the tr-type G domain; sequence TRVRNIGIIA…AVIKFVPNPR (245 aa). GTP is bound by residues 27–34, 93–97, and 147–150; these read AHVDHGKT, DTPGH, and NKVD. At His604 the chain carries Diphthamide.

This sequence belongs to the TRAFAC class translation factor GTPase superfamily. Classic translation factor GTPase family. EF-G/EF-2 subfamily.

Its subcellular location is the cytoplasm. In terms of biological role, catalyzes the GTP-dependent ribosomal translocation step during translation elongation. During this step, the ribosome changes from the pre-translocational (PRE) to the post-translocational (POST) state as the newly formed A-site-bound peptidyl-tRNA and P-site-bound deacylated tRNA move to the P and E sites, respectively. Catalyzes the coordinated movement of the two tRNA molecules, the mRNA and conformational changes in the ribosome. The chain is Elongation factor 2 (fusA) from Sulfolobus acidocaldarius (strain ATCC 33909 / DSM 639 / JCM 8929 / NBRC 15157 / NCIMB 11770).